The chain runs to 299 residues: Putative ankyrin repeat protein R864 (299 aa).

ANK repeat units lie at residues 78-107 (SLNK…NIES), 108-137 (NNNY…NIKS), 139-167 (NNRV…DIRS), 168-197 (NDDY…DIRS), 199-227 (YYYI…DIRA), 228-257 (YNNC…DIRN), and 258-287 (DNDY…DIKT).

This chain is Putative ankyrin repeat protein R864, found in Acanthamoeba polyphaga mimivirus (APMV).